The chain runs to 301 residues: Lufaxin (301 aa).

The signal sequence occupies residues 1–23 (MNSINFLSIVGLISFGFIVAVKC). Cystine bridges form between Cys52–Cys60, Cys78–Cys137, Cys102–Cys112, and Cys258–Cys265. A glycan (N-linked (GlcNAc...) asparagine) is linked at Asn262.

As to quaternary structure, interacts with factor Xa. Associates with complement proconvertase C3b-B complex. Expressed in salivary glands.

The protein resides in the secreted. Sand fly salivary protein with antithrombotic, and anti-complement (alternative pathway) activities. Is a slow, tight, non-competitive, and reversible inhibitor of factor Xa (FXa, F10). Is specific for FXa (Kd=3.86 nM) and does not interact with non-activated FX, or all other enzymes tested. In addition, it blocks prothrombinase and increases both prothrombin time and activated partial thromboplastin time. It also prevents protease-activated receptor 2 (F2RL1, PAR2) activation by FXa. In vivo, it abrogates edema formation triggered by injection of FXa in the paw of mice. Moreover, it prevents FeCl(3)-induced carotid artery thrombus formation and prolongs activated partial thromboplastin time ex vivo, implying that it works as an anticoagulant in vivo. It also inhibits the early steps of the alternative pathway of complement by direct binding to the proconvertase C3b-B complex, by inhibiting activation of factor B and consequently the formation of the C3 convertase. This is Lufaxin from Lutzomyia longipalpis (Sand fly).